Here is a 319-residue protein sequence, read N- to C-terminus: Methionyl-tRNA formyltransferase (319 aa).

A (6S)-5,6,7,8-tetrahydrofolate-binding site is contributed by 110–113 (SLLP).

Belongs to the Fmt family.

It carries out the reaction L-methionyl-tRNA(fMet) + (6R)-10-formyltetrahydrofolate = N-formyl-L-methionyl-tRNA(fMet) + (6S)-5,6,7,8-tetrahydrofolate + H(+). Attaches a formyl group to the free amino group of methionyl-tRNA(fMet). The formyl group appears to play a dual role in the initiator identity of N-formylmethionyl-tRNA by promoting its recognition by IF2 and preventing the misappropriation of this tRNA by the elongation apparatus. This is Methionyl-tRNA formyltransferase from Geobacillus thermodenitrificans (strain NG80-2).